Reading from the N-terminus, the 183-residue chain is dTDP-4-dehydrorhamnose 3,5-epimerase (183 aa).

Residues Arg24, Glu29, 48 to 50, and Arg60 each bind substrate; that span reads QDN. Residue His63 is the Proton acceptor of the active site. Residues Lys73 and His120 each coordinate substrate. Tyr133 functions as the Proton donor in the catalytic mechanism. The substrate site is built by Glu144 and Lys169.

Belongs to the dTDP-4-dehydrorhamnose 3,5-epimerase family. In terms of assembly, homodimer.

The enzyme catalyses dTDP-4-dehydro-6-deoxy-alpha-D-glucose = dTDP-4-dehydro-beta-L-rhamnose. It functions in the pathway carbohydrate biosynthesis; dTDP-L-rhamnose biosynthesis. The protein operates within bacterial outer membrane biogenesis; LPS O-antigen biosynthesis. In terms of biological role, catalyzes the epimerization of the C3' and C5'positions of dTDP-6-deoxy-D-xylo-4-hexulose, forming dTDP-6-deoxy-L-lyxo-4-hexulose. This Salmonella typhimurium (strain LT2 / SGSC1412 / ATCC 700720) protein is dTDP-4-dehydrorhamnose 3,5-epimerase.